The following is a 97-amino-acid chain: Co-chaperonin GroES (97 aa).

It belongs to the GroES chaperonin family. In terms of assembly, heptamer of 7 subunits arranged in a ring. Interacts with the chaperonin GroEL.

It is found in the cytoplasm. Functionally, together with the chaperonin GroEL, plays an essential role in assisting protein folding. The GroEL-GroES system forms a nano-cage that allows encapsulation of the non-native substrate proteins and provides a physical environment optimized to promote and accelerate protein folding. GroES binds to the apical surface of the GroEL ring, thereby capping the opening of the GroEL channel. This chain is Co-chaperonin GroES, found in Aeromonas salmonicida (strain A449).